The chain runs to 142 residues: Transcriptional regulator MraZ (142 aa).

SpoVT-AbrB domains lie at 5 to 47 (EYPY…PLAS) and 76 to 119 (ANKA…NPGR).

The protein belongs to the MraZ family. Forms oligomers.

It is found in the cytoplasm. The protein localises to the nucleoid. The polypeptide is Transcriptional regulator MraZ (Deinococcus deserti (strain DSM 17065 / CIP 109153 / LMG 22923 / VCD115)).